The sequence spans 340 residues: Flavonoid 7-O-methyltransferase 1 (340 aa).

Asp207 provides a ligand contact to S-adenosyl-L-methionine. His245 acts as the Proton acceptor in catalysis.

This sequence belongs to the class I-like SAM-binding methyltransferase superfamily. Cation-independent O-methyltransferase family. In terms of assembly, homodimer. As to expression, expressed in leaves.

It carries out the reaction (2S)-naringenin + S-adenosyl-L-methionine = (2S)-sakuranetin + S-adenosyl-L-homocysteine + H(+). It catalyses the reaction scutellarein + S-adenosyl-L-methionine = scutellarein 7-methyl ether + S-adenosyl-L-homocysteine. The enzyme catalyses apigenin + S-adenosyl-L-methionine = genkwanin + S-adenosyl-L-homocysteine + H(+). The catalysed reaction is luteolin + S-adenosyl-L-methionine = luteolin 7-methyl ether + S-adenosyl-L-homocysteine + H(+). It carries out the reaction chrysoeriol + S-adenosyl-L-methionine = velutin + S-adenosyl-L-homocysteine. It catalyses the reaction diosmetin + S-adenosyl-L-methionine = luteolin 4',7-dimethyl ether + S-adenosyl-L-homocysteine. The enzyme catalyses acacetin + S-adenosyl-L-methionine = apigenin 4',7-dimethyl ether + S-adenosyl-L-homocysteine. The catalysed reaction is scutellarein 4'-methyl ether + S-adenosyl-L-methionine = ladanein + S-adenosyl-L-homocysteine. It participates in flavonoid metabolism. Functionally, flavonoid 7-O-methyltransferase involved in the biosynthesis of polymethoxylated flavonoids natural products such as nevadensin and salvigenin, aroma compounds which contribute to the flavor of sweet basil, and exhibit pharmacological activities such as anti-allergic, anti-oxidant, antibacterial, anti-proliferative, and anti-inflammatory effects. Catalyzes S-adenosylmethionine-dependent regioselective 7-O-methylation of flavonoids; active on various hydroxylated flavonoid substrates, including apigenin (API) and luteolin (LUT), and, with a lower efficiency, scutellarein (SCU), naringenin (NAR), chrysoeriol (CHRYS), diosmetin (DIOS), acacetin (ACA) and scutellarein-7-methyl ether (SCU7Me). The protein is Flavonoid 7-O-methyltransferase 1 of Ocimum basilicum (Sweet basil).